The primary structure comprises 441 residues: Tubulin beta chain (441 aa).

Residues Gln-11, Glu-69, Ser-138, Gly-142, Thr-143, Gly-144, Asn-204, and Asn-226 each coordinate GTP. Residue Glu-69 participates in Mg(2+) binding.

Belongs to the tubulin family. In terms of assembly, dimer of alpha and beta chains. A typical microtubule is a hollow water-filled tube with an outer diameter of 25 nm and an inner diameter of 15 nM. Alpha-beta heterodimers associate head-to-tail to form protofilaments running lengthwise along the microtubule wall with the beta-tubulin subunit facing the microtubule plus end conferring a structural polarity. Microtubules usually have 13 protofilaments but different protofilament numbers can be found in some organisms and specialized cells. The cofactor is Mg(2+).

The protein localises to the cytoplasm. It localises to the cytoskeleton. In terms of biological role, tubulin is the major constituent of microtubules, a cylinder consisting of laterally associated linear protofilaments composed of alpha- and beta-tubulin heterodimers. Microtubules grow by the addition of GTP-tubulin dimers to the microtubule end, where a stabilizing cap forms. Below the cap, tubulin dimers are in GDP-bound state, owing to GTPase activity of alpha-tubulin. In Babesia bovis, this protein is Tubulin beta chain.